The chain runs to 209 residues: Uracil phosphoribosyltransferase (209 aa).

5-phospho-alpha-D-ribose 1-diphosphate is bound by residues Arg-79, Arg-104, and 131–139 (DPMLATGGS). Uracil contacts are provided by residues Ile-194 and 199–201 (GDA). Residue Asp-200 coordinates 5-phospho-alpha-D-ribose 1-diphosphate.

Belongs to the UPRTase family. The cofactor is Mg(2+).

The enzyme catalyses UMP + diphosphate = 5-phospho-alpha-D-ribose 1-diphosphate + uracil. It participates in pyrimidine metabolism; UMP biosynthesis via salvage pathway; UMP from uracil: step 1/1. With respect to regulation, allosterically activated by GTP. Its function is as follows. Catalyzes the conversion of uracil and 5-phospho-alpha-D-ribose 1-diphosphate (PRPP) to UMP and diphosphate. This is Uracil phosphoribosyltransferase from Brevibacillus brevis (strain 47 / JCM 6285 / NBRC 100599).